Here is an 865-residue protein sequence, read N- to C-terminus: MITTKELRNKFINYFESKNHSHQPSSSLIPFGDDTLLFTNAGMVQFKDVFLGIEKKDFSRAVTVQKCLRAGGKHNDLDNVGYTARHHTFFEMLGNFSFGDYFKKEAISFAWEFLTKEIKLPVEKLWVTIYASDDEAFDVWHKHIGLAKERIIRIDSSDNFWSMGDTGPCGPCTEIFYDHGEDVAGGLPGTPEQDGDRYIEIWNIVFMQYNRHADGSTTDLPKPSVDTGMGLERISAVLQNVHSNYEIDLFQALIKKAQQVTHAKDINSPSLKVIADHIRACAFLIADGVLPANEGRGYVLRRIIRRAIRHGNKVGAKEIFFYKLVAELVSQMGEAYSQLIDKRELIEKTLIKEEELFLKTIENGIKIFDAEIENLKDNTISGEVAFKLYDTYGFPFDLTADMAREKGLKVDEQAFLAQMQIQKQRSKEAGKFNVDYNSLINSQVKSEFRGYSTLIEDAKVLEIYQDGQLVASTSEQVSAVVVLDKTPFYAESGGQVGDKGILEGIGFEFVVEDVQKSGEAILHIGKLVKGRLNLNDELTARVSDKPRLATAANHSATHLLHKALKLVLGGHAEQKGSLVDENRLRFDFTHDKAISRSEIEQIELLVNQQIRANYPVTTIETSQQKAKSLGAEALFGEKYGDIVRVISMGDFSIELCGGTHVAYTGDIGLFKVTSEGSIASGVRRIEAVTADKAIRHTFTNENKIIAIKDSLKANDTNLIDKIKSMLEQIKNQEKQIAKLKKELLSGSSNDIKETNIGDIKVVVANVDGVDVKTLRNKIDDYKSKNTKVIAVLTTTNADKVQFVIGVSNALTTLIKAGDIAKELSSHIDGKGGGRADMAQGGGNNSANIDQALSQVEKFILNNIKE.

Residues His-554, His-558, Cys-656, and His-660 each contribute to the Zn(2+) site.

Belongs to the class-II aminoacyl-tRNA synthetase family. Zn(2+) serves as cofactor.

The protein resides in the cytoplasm. It carries out the reaction tRNA(Ala) + L-alanine + ATP = L-alanyl-tRNA(Ala) + AMP + diphosphate. In terms of biological role, catalyzes the attachment of alanine to tRNA(Ala) in a two-step reaction: alanine is first activated by ATP to form Ala-AMP and then transferred to the acceptor end of tRNA(Ala). Also edits incorrectly charged Ser-tRNA(Ala) and Gly-tRNA(Ala) via its editing domain. In Francisella tularensis subsp. tularensis (strain WY96-3418), this protein is Alanine--tRNA ligase.